Here is a 389-residue protein sequence, read N- to C-terminus: MKDNLERAKLMVSSTVFSWLLLCLFAVTTSVSVQPTCTFPAIYNFGDSNSDTGGISAAFEPIRDPYGQGFFHRPTGRDSDGRLTIDFIAERLGLPYLSAYLNSLGSNFRHGANFATGGSTIRRQNETIFQYGISPFSLDMQIAQFDQFKARSALLFTQIKSRYDREKLPRQEEFAKALYTFDIGQNDLSVGFRTMSVDQLKATIPDIVNHLASAVRNIYQQGGRTFWVHNTGPFGCLPVNMFYMGTPAPGYLDKSGCVKAQNEMAMEFNRKLKETVINLRKELTQAAITYVDVYTAKYEMMSNPKKLGFANPLKVCCGYHEKYDHIWCGNKGKVNNTEIYGGSCPNPVMAVSWDGVHYTEAANKHVADRTLNGLLTDPPVPITRACYRQ.

A signal peptide spans 1 to 30 (MKDNLERAKLMVSSTVFSWLLLCLFAVTTS). Catalysis depends on Ser-48, which acts as the Nucleophile. Asn-125 and Asn-335 each carry an N-linked (GlcNAc...) asparagine glycan. Catalysis depends on residues Asp-354 and His-357.

Belongs to the 'GDSL' lipolytic enzyme family.

Its subcellular location is the secreted. In Arabidopsis thaliana (Mouse-ear cress), this protein is GDSL esterase/lipase At5g14450.